We begin with the raw amino-acid sequence, 372 residues long: Envelope phospholipase OPG057 (372 aa).

The YPPL signature appears at 153–156 (YPPL). Residues cysteine 185 and cysteine 186 are each lipidated (S-palmitoyl cysteine; by host). The 28-residue stretch at 307-334 (FTIQNNTKLLIVDDEYVHITSANFDGTH) folds into the PLD phosphodiesterase domain.

This sequence belongs to the orthopoxvirus OPG057 family. In terms of assembly, interacts with protein OPG190/B5. In terms of processing, palmitoylated. Attachment of the palmitate moiety is essential for correct intracellular targeting and protein function.

Its subcellular location is the virion membrane. It localises to the host Golgi apparatus. It is found in the host trans-Golgi network. The protein resides in the host endoplasmic reticulum membrane. The enzyme catalyses a 1,2-diacyl-sn-glycero-3-phosphocholine + H2O = a 1,2-diacyl-sn-glycero-3-phosphate + choline + H(+). Major envelope protein that plays a role in the biogenesis of the viral double membrane and in egress of virus from the host cell. Produces the wrapped form of virus that is required for cell-to-cell spread. Acts as a lipase with broad specificity including phospholipase C, phospholipase A, and triacylglycerol lipase activities. The protein is Envelope phospholipase OPG057 (OPG057) of Vaccinia virus (strain Western Reserve) (VACV).